Reading from the N-terminus, the 304-residue chain is Syntaxin-132 (304 aa).

At Met1 the chain carries N-acetylmethionine. Positions Met1–Gly30 are disordered. Residues Met1 to Lys275 are Cytoplasmic-facing. Coiled coils occupy residues Leu34–Ser67 and Thr129–Val162. In terms of domain architecture, t-SNARE coiled-coil homology spans Leu204 to Ala266. The chain crosses the membrane as a helical; Anchor for type IV membrane protein span at residues Trp276–Leu296. Residues Lys297–Ala304 lie on the Vesicular side of the membrane.

It belongs to the syntaxin family. Part of the t-SNARE complex. In terms of tissue distribution, widely expressed in all tissues throughout plant development.

It localises to the cell membrane. In terms of biological role, vesicle trafficking protein that functions in the secretory pathway. Acts in coordination with SYP123 to mediate tip-focused membrane trafficking for root hair tip growth. Functions in root hair elongation by forming SNARE complexes with VAMP721,VAMP722 or VAMP724. Involved in cytokinesis. Acts as a cell plate-specific syntaxin, required for the fusion of vesicles at the plane of cell division. Required for secretory trafficking to the plasma membrane during interphase. Involved in the regulation of density of the H(+) ATPase proteins at the plasma membrane of root and shoot in epidermal cells. Modulation of SYP132 expression by auxin affects clathrin-sensitive H(+) ATPase traffic from the plasma membrane, and influences apoplastic acidification and plant growth. The sequence is that of Syntaxin-132 from Arabidopsis thaliana (Mouse-ear cress).